The primary structure comprises 308 residues: Formamidopyrimidine-DNA glycosylase (308 aa).

The active-site Schiff-base intermediate with DNA is the P2. E3 serves as the catalytic Proton donor. The active-site Proton donor; for beta-elimination activity is the K61. H100, R120, and R181 together coordinate DNA. An FPG-type zinc finger spans residues 267–301 (AVYGQEGRPCPRCGALVRRDAFMNRSSFSCPVCQP). The active-site Proton donor; for delta-elimination activity is R291.

The protein belongs to the FPG family. As to quaternary structure, monomer. Requires Zn(2+) as cofactor.

It carries out the reaction Hydrolysis of DNA containing ring-opened 7-methylguanine residues, releasing 2,6-diamino-4-hydroxy-5-(N-methyl)formamidopyrimidine.. The catalysed reaction is 2'-deoxyribonucleotide-(2'-deoxyribose 5'-phosphate)-2'-deoxyribonucleotide-DNA = a 3'-end 2'-deoxyribonucleotide-(2,3-dehydro-2,3-deoxyribose 5'-phosphate)-DNA + a 5'-end 5'-phospho-2'-deoxyribonucleoside-DNA + H(+). Functionally, involved in base excision repair of DNA damaged by oxidation or by mutagenic agents. Acts as a DNA glycosylase that recognizes and removes damaged bases. Has a preference for oxidized purines, such as 7,8-dihydro-8-oxoguanine (8-oxoG). Has AP (apurinic/apyrimidinic) lyase activity and introduces nicks in the DNA strand. Cleaves the DNA backbone by beta-delta elimination to generate a single-strand break at the site of the removed base with both 3'- and 5'-phosphates. The polypeptide is Formamidopyrimidine-DNA glycosylase (Kineococcus radiotolerans (strain ATCC BAA-149 / DSM 14245 / SRS30216)).